The chain runs to 155 residues: NADPH-dependent 7-cyano-7-deazaguanine reductase (155 aa).

The active-site Thioimide intermediate is cysteine 53. Aspartate 60 acts as the Proton donor in catalysis. Substrate-binding positions include 75-77 (VES) and 94-95 (HE).

The protein belongs to the GTP cyclohydrolase I family. QueF type 1 subfamily.

Its subcellular location is the cytoplasm. The enzyme catalyses 7-aminomethyl-7-carbaguanine + 2 NADP(+) = 7-cyano-7-deazaguanine + 2 NADPH + 3 H(+). It participates in tRNA modification; tRNA-queuosine biosynthesis. Its function is as follows. Catalyzes the NADPH-dependent reduction of 7-cyano-7-deazaguanine (preQ0) to 7-aminomethyl-7-deazaguanine (preQ1). In Brucella suis (strain ATCC 23445 / NCTC 10510), this protein is NADPH-dependent 7-cyano-7-deazaguanine reductase.